We begin with the raw amino-acid sequence, 316 residues long: Apolipoprotein E (316 aa).

A signal peptide spans 1–18 (MKVLWVALVVALLAGCQA). 8 repeat units span residues 79–100 (VLMEETMKEVKAYREELEGQLA), 101–122 (PMAQETQARVSKELQAAQARLG), 123–144 (SDMEDLRNRLAQYRSEVQAMLG), 145–166 (QSTEELRARMASHLRKLRKRLL), 167–188 (RDADDLKKRLAVYQAGASEGAE), 189–210 (RSVSAIRERLRPLVEQGQSRAA), 211–232 (TLSTQAAQPLLDRAEAWRQKLH), and 233–254 (GRLEEVGVRAQDRLDKMRQQLE). The segment at 79–254 (VLMEETMKEV…RLDKMRQQLE (176 aa)) is 8 X 22 AA approximate tandem repeats. Met-142 bears the Methionine sulfoxide mark. Ser-146 carries the post-translational modification Phosphoserine. Positions 157–167 (HLRKLRKRLLR) are LDL and other lipoprotein receptors binding. Position 161 to 164 (161 to 164 (LRKR)) interacts with heparin. Positions 209–289 (AATLSTQAAQ…SWFEPLVGDM (81 aa)) are lipid-binding and lipoprotein association. O-linked (GalNAc...) threonine glycosylation is present at Thr-211. 228–235 (RQKLHGRL) is a heparin binding site. The tract at residues 265–316 (SQIRLQAEAFQARLRSWFEPLVGDMQRQWAGLVEKVQLALHLSPTSPPSENH) is homooligomerization. Positions 277–289 (RLRSWFEPLVGDM) are specificity for association with VLDL.

The protein belongs to the apolipoprotein A1/A4/E family. Homotetramer. May interact with ABCA1; functionally associated with ABCA1 in the biogenesis of HDLs. May interact with APP/A4 amyloid-beta peptide; the interaction is extremely stable in vitro but its physiological significance is unclear. May interact with MAPT. May interact with MAP2. In the cerebrospinal fluid, interacts with secreted SORL1. Interacts with PMEL; this allows the loading of PMEL luminal fragment on ILVs to induce fibril nucleation. Post-translationally, APOE exists as multiple glycosylated and sialylated glycoforms within cells and in plasma. The extent of glycosylation and sialylation are tissue and context specific. In terms of processing, glycated in plasma VLDL. Phosphorylated by FAM20C in the extracellular medium.

The protein resides in the secreted. The protein localises to the extracellular space. It localises to the extracellular matrix. It is found in the extracellular vesicle. Its subcellular location is the endosome. The protein resides in the multivesicular body. In terms of biological role, APOE is an apolipoprotein, a protein associating with lipid particles, that mainly functions in lipoprotein-mediated lipid transport between organs via the plasma and interstitial fluids. APOE is a core component of plasma lipoproteins and is involved in their production, conversion and clearance. Apolipoproteins are amphipathic molecules that interact both with lipids of the lipoprotein particle core and the aqueous environment of the plasma. As such, APOE associates with chylomicrons, chylomicron remnants, very low density lipoproteins (VLDL) and intermediate density lipoproteins (IDL) but shows a preferential binding to high-density lipoproteins (HDL). It also binds a wide range of cellular receptors including the LDL receptor/LDLR and the very low-density lipoprotein receptor/VLDLR that mediate the cellular uptake of the APOE-containing lipoprotein particles. Finally, APOE also has a heparin-binding activity and binds heparan-sulfate proteoglycans on the surface of cells, a property that supports the capture and the receptor-mediated uptake of APOE-containing lipoproteins by cells. The sequence is that of Apolipoprotein E (APOE) from Capra hircus aegagrus (Wild goat).